A 338-amino-acid chain; its full sequence is MQIFYDKDCDLSIIQSKKVAIIGYGSQGHAHALNLKDSGVDVTVGLRAGSASWKKAENAGLKVAEVPAAVKQADLVMILTPDEFQSQLYRDVIEPNIKEGATLAFAHGFSVLYNQVVPRKDLDVIMVAPKAPGHTVRSEFQRGSGVPDLIAIHQDASGNARNVALSYASGVGGGRTGIIETSFREETETDLFGEQAVLCGGAVELVKMGFETLVEAGYAPEMAYFECLHELKLIVDLMFEGGIADMNYSVSNNAEYGEYVTGPEVINEQSREAMRNALKRIQSGEYAKMFIQEGALNYPSMTARRRQNAAHGIEQTGAKLRAMMPWIQANKIVDKEKN.

Residues 1-181 (MQIFYDKDCD…GGGRTGIIET (181 aa)) enclose the KARI N-terminal Rossmann domain. NADP(+)-binding positions include 24-27 (YGSQ), arginine 47, serine 50, serine 52, and 82-85 (DEFQ). The active site involves histidine 107. Glycine 133 serves as a coordination point for NADP(+). The region spanning 182 to 327 (SFREETETDL…AKLRAMMPWI (146 aa)) is the KARI C-terminal knotted domain. Mg(2+) contacts are provided by aspartate 190, glutamate 194, glutamate 226, and glutamate 230. Serine 251 serves as a coordination point for substrate.

The protein belongs to the ketol-acid reductoisomerase family. Mg(2+) serves as cofactor.

It catalyses the reaction (2R)-2,3-dihydroxy-3-methylbutanoate + NADP(+) = (2S)-2-acetolactate + NADPH + H(+). It carries out the reaction (2R,3R)-2,3-dihydroxy-3-methylpentanoate + NADP(+) = (S)-2-ethyl-2-hydroxy-3-oxobutanoate + NADPH + H(+). It functions in the pathway amino-acid biosynthesis; L-isoleucine biosynthesis; L-isoleucine from 2-oxobutanoate: step 2/4. The protein operates within amino-acid biosynthesis; L-valine biosynthesis; L-valine from pyruvate: step 2/4. Involved in the biosynthesis of branched-chain amino acids (BCAA). Catalyzes an alkyl-migration followed by a ketol-acid reduction of (S)-2-acetolactate (S2AL) to yield (R)-2,3-dihydroxy-isovalerate. In the isomerase reaction, S2AL is rearranged via a Mg-dependent methyl migration to produce 3-hydroxy-3-methyl-2-ketobutyrate (HMKB). In the reductase reaction, this 2-ketoacid undergoes a metal-dependent reduction by NADPH to yield (R)-2,3-dihydroxy-isovalerate. In Acinetobacter baumannii (strain AB0057), this protein is Ketol-acid reductoisomerase (NADP(+)).